The primary structure comprises 321 residues: Annexin D3 (321 aa).

The residue at position 2 (Ala2) is an N-acetylalanine. Annexin repeat units lie at residues 11–82 (PSPA…SWTY), 83–159 (DPAE…TLAS), 171–243 (EVAT…VAIF), and 247–318 (TPEK…TLLG). The Ca(2+) site is built by Gly26, Gly28, and Glu68. At Thr117 the chain carries Phosphothreonine. The Ca(2+) site is built by Ile260 and Gly264. Position 289 is a phosphotyrosine (Tyr289). Residue Asp304 coordinates Ca(2+).

The protein belongs to the annexin (TC 1.A.31.1) family. In terms of tissue distribution, expressed mainly in roots and flowers. Lower in stems and leaves.

The sequence is that of Annexin D3 (ANN3) from Arabidopsis thaliana (Mouse-ear cress).